A 331-amino-acid polypeptide reads, in one-letter code: tRNA pseudouridine synthase B (331 aa).

The active-site Nucleophile is aspartate 51.

This sequence belongs to the pseudouridine synthase TruB family. Type 1 subfamily.

It catalyses the reaction uridine(55) in tRNA = pseudouridine(55) in tRNA. In terms of biological role, responsible for synthesis of pseudouridine from uracil-55 in the psi GC loop of transfer RNAs. This chain is tRNA pseudouridine synthase B, found in Verminephrobacter eiseniae (strain EF01-2).